A 160-amino-acid chain; its full sequence is Small ribosomal subunit protein uS17m (160 aa).

Belongs to the universal ribosomal protein uS17 family. Component of the mitochondrial ribosome small subunit (28S) which comprises a 12S rRNA and about 30 distinct proteins.

The protein localises to the mitochondrion. This is Small ribosomal subunit protein uS17m (mrps-17) from Caenorhabditis elegans.